The sequence spans 474 residues: Trehalose-6-phosphate synthase (474 aa).

Arg10 serves as a coordination point for D-glucose 6-phosphate. A UDP-alpha-D-glucose-binding site is contributed by 22-23 (GG). D-glucose 6-phosphate contacts are provided by Tyr77 and Asp131. Residues Arg263 and Lys268 each coordinate UDP-alpha-D-glucose. Residue Arg301 participates in D-glucose 6-phosphate binding. UDP-alpha-D-glucose-binding positions include Phe340 and 366 to 370 (LVAKE).

This sequence belongs to the glycosyltransferase 20 family. In terms of assembly, homotetramer.

The catalysed reaction is D-glucose 6-phosphate + UDP-alpha-D-glucose = alpha,alpha-trehalose 6-phosphate + UDP + H(+). The protein operates within glycan biosynthesis; trehalose biosynthesis. Its function is as follows. Probably involved in the osmoprotection via the biosynthesis of trehalose. Catalyzes the transfer of glucose from UDP-alpha-D-glucose (UDP-Glc) to D-glucose 6-phosphate (Glc-6-P) to form trehalose-6-phosphate. Acts with retention of the anomeric configuration of the UDP-sugar donor. The sequence is that of Trehalose-6-phosphate synthase from Escherichia coli O1:K1 / APEC.